Consider the following 440-residue polypeptide: Adenylyltransferase and sulfurtransferase UBA4 (440 aa).

At Met-1 the chain carries N-acetylmethionine. ATP contacts are provided by residues Gly-77, Asp-98, 105–109 (SNLHR), Lys-122, and 166–167 (DS). Zn(2+) is bound by residues Cys-208 and Cys-211. Residue Cys-225 is the Glycyl thioester intermediate; for adenylyltransferase activity of the active site. Zn(2+)-binding residues include Cys-286 and Cys-289. Residue Ser-326 is modified to Phosphoserine. In terms of domain architecture, Rhodanese spans 339–438 (FLAKHIFLDV…YIDDIDQTIP (100 aa)). Cys-397 functions as the Cysteine persulfide intermediate; for sulfurtransferase activity in the catalytic mechanism.

In the N-terminal section; belongs to the HesA/MoeB/ThiF family. UBA4 subfamily. It depends on Zn(2+) as a cofactor.

It localises to the cytoplasm. Its subcellular location is the cytosol. It participates in tRNA modification; 5-methoxycarbonylmethyl-2-thiouridine-tRNA biosynthesis. Its function is as follows. Plays a central role in 2-thiolation of mcm(5)S(2)U at tRNA wobble positions of cytosolic tRNA(Lys), tRNA(Glu) and tRNA(Gln). Acts by mediating the C-terminal thiocarboxylation of sulfur carrier URM1. Its N-terminus first activates URM1 as acyl-adenylate (-COAMP), then the persulfide sulfur on the catalytic cysteine is transferred to URM1 to form thiocarboxylation (-COSH) of its C-terminus. The reaction probably involves hydrogen sulfide that is generated from the persulfide intermediate and that acts as a nucleophile towards URM1. Subsequently, a transient disulfide bond is formed. Does not use thiosulfate as sulfur donor; NFS1 probably acting as a sulfur donor for thiocarboxylation reactions. Prior mcm(5) tRNA modification by the elongator complex is required for 2-thiolation. May also be involved in protein urmylation. This Saccharomyces cerevisiae (strain YJM789) (Baker's yeast) protein is Adenylyltransferase and sulfurtransferase UBA4.